The primary structure comprises 466 residues: ATP synthase subunit beta (466 aa).

148–155 (GGAGVGKT) is a binding site for ATP.

Belongs to the ATPase alpha/beta chains family. In terms of assembly, F-type ATPases have 2 components, CF(1) - the catalytic core - and CF(0) - the membrane proton channel. CF(1) has five subunits: alpha(3), beta(3), gamma(1), delta(1), epsilon(1). CF(0) has three main subunits: a(1), b(2) and c(9-12). The alpha and beta chains form an alternating ring which encloses part of the gamma chain. CF(1) is attached to CF(0) by a central stalk formed by the gamma and epsilon chains, while a peripheral stalk is formed by the delta and b chains.

It is found in the cell inner membrane. It carries out the reaction ATP + H2O + 4 H(+)(in) = ADP + phosphate + 5 H(+)(out). Functionally, produces ATP from ADP in the presence of a proton gradient across the membrane. The catalytic sites are hosted primarily by the beta subunits. This Xylella fastidiosa (strain M23) protein is ATP synthase subunit beta.